Consider the following 198-residue polypeptide: Ribonuclease HII (198 aa).

The RNase H type-2 domain maps to 11–198; the sequence is ELIAGVDEVG…SPVRKLLENE (188 aa). Residues Asp17, Glu18, and Asp109 each contribute to the a divalent metal cation site.

This sequence belongs to the RNase HII family. The cofactor is Mn(2+). Mg(2+) serves as cofactor.

The protein localises to the cytoplasm. It carries out the reaction Endonucleolytic cleavage to 5'-phosphomonoester.. In terms of biological role, endonuclease that specifically degrades the RNA of RNA-DNA hybrids. In Mannheimia succiniciproducens (strain KCTC 0769BP / MBEL55E), this protein is Ribonuclease HII.